The primary structure comprises 535 residues: Alpha-1,3-mannosyl-glycoprotein 4-beta-N-acetylglucosaminyltransferase A (535 aa).

Residues 1-6 (MRLRNG) lie on the Cytoplasmic side of the membrane. The chain crosses the membrane as a helical; Signal-anchor for type II membrane protein span at residues 7–27 (TVATALVFVTSFLTLSWYTTW). Residues 28–63 (QNGKEKLIAYQREFLALKERLRVAEHRISQRSSELN) are a coiled coil. Topologically, residues 28-535 (QNGKEKLIAY…NEIHIKKVTS (508 aa)) are lumenal. 2 N-linked (GlcNAc...) asparagine glycosylation sites follow: Asn-77 and Asn-458. Ser-474 is subject to Phosphoserine.

The protein belongs to the glycosyltransferase 54 family. It depends on a divalent metal cation as a cofactor. N-glycosylated.

Its subcellular location is the golgi apparatus membrane. It localises to the secreted. It carries out the reaction N(4)-{beta-D-GlcNAc-(1-&gt;2)-alpha-D-Man-(1-&gt;3)-[beta-D-GlcNAc-(1-&gt;2)-alpha-D-Man-(1-&gt;6)]-beta-D-Man-(1-&gt;4)-beta-D-GlcNAc-(1-&gt;4)-beta-D-GlcNAc}-L-asparaginyl-[protein] + UDP-N-acetyl-alpha-D-glucosamine = N(4)-{beta-D-GlcNAc-(1-&gt;2)-[beta-D-GlcNAc-(1-&gt;4)]-alpha-D-Man-(1-&gt;3)-[beta-D-GlcNAc-(1-&gt;2)-alpha-D-Man-(1-&gt;6)]-beta-D-Man-(1-&gt;4)-beta-D-GlcNAc-(1-&gt;4)-beta-D-GlcNAc}-L-asparaginyl-[protein] + UDP + H(+). The catalysed reaction is an N(4)-{beta-D-GlcNAc-(1-&gt;2)-alpha-D-Man-(1-&gt;3)-[alpha-D-Man-(1-&gt;6)]-beta-D-Man-(1-&gt;4)-beta-D-GlcNAc-(1-&gt;4)-beta-D-GlcNAc}-L-asparaginyl-[protein] + UDP-N-acetyl-alpha-D-glucosamine = an N(4)-{beta-D-GlcNAc-(1-&gt;2)-[beta-D-GlcNAc-(1-&gt;4)]-alpha-D-Man-(1-&gt;3)-[alpha-D-Man-(1-&gt;6)]-beta-D-Man-(1-&gt;4)-beta-D-GlcNAc-(1-&gt;4)-beta-D-GlcNAc}-L-asparaginyl-[protein] + UDP + H(+). The enzyme catalyses an N(4)-{beta-D-GlcNAc-(1-&gt;2)-alpha-D-Man-(1-&gt;3)-[beta-D-GlcNAc-(1-&gt;2)-[beta-D-GlcNAc-(1-&gt;6)]-alpha-D-Man-(1-&gt;6)]-beta-D-Man-(1-&gt;4)-beta-D-GlcNAc-(1-&gt;4)-beta-D-GlcNAc}-L-asparaginyl-[protein] + UDP-N-acetyl-alpha-D-glucosamine = an N(4)-{beta-D-GlcNAc-(1-&gt;2)-[beta-D-GlcNAc-(1-&gt;4)]-alpha-D-Man-(1-&gt;3)-[beta-D-GlcNAc-(1-&gt;2)-[beta-D-GlcNAc-(1-&gt;6)]-alpha-D-Man-(1-&gt;6)]-beta-D-Man-(1-&gt;4)-beta-D-GlcNAc-(1-&gt;4)-beta-D-GlcNAc}-L-asparaginyl-[protein] + UDP + H(+). It catalyses the reaction an N(4)-{beta-D-GlcNAc-(1-&gt;2)-alpha-D-Man-(1-&gt;3)-[beta-D-GlcNAc-(1-&gt;2)-alpha-D-Man-(1-&gt;6)]-beta-D-Man-(1-&gt;4)-beta-D-GlcNAc-(1-&gt;4)-[alpha-L-Fuc-(1-&gt;6)]-beta-D-GlcNAc}-L-asparaginyl-[protein] + UDP-N-acetyl-alpha-D-glucosamine = N(4)-{beta-D-GlcNAc-(1-&gt;2)-[beta-D-GlcNAc-(1-&gt;4)]-alpha-D-Man-(1-&gt;3)-[beta-D-GlcNAc-(1-&gt;2)-alpha-D-Man-(1-&gt;6)]-beta-D-Man-(1-&gt;4)-beta-D-GlcNAc-(1-&gt;4)-[alpha-L-Fuc-(1-&gt;6)]-beta-D-GlcNAc}-asparaginyl-[protein] + UDP + H(+). It carries out the reaction an N(4)-{beta-D-GlcNAc-(1-&gt;2)-alpha-D-Man-(1-&gt;3)-[beta-D-Gal-(1-&gt;4)-beta-D-GlcNAc-(1-&gt;2)-alpha-D-Man-(1-&gt;6)]-beta-D-Man-(1-&gt;4)-beta-D-GlcNAc-(1-&gt;4)-beta-D-GlcNAc}-L-asparaginyl-[protein] + UDP-N-acetyl-alpha-D-glucosamine = an N(4)-{beta-D-GlcNAc-(1-&gt;2)-[beta-D-GlcNAc-(1-&gt;4)]-alpha-D-Man-(1-&gt;3)-[beta-D-Gal-(1-&gt;4)-beta-D-GlcNAc-(1-&gt;2)-alpha-D-Man-(1-&gt;6)]-beta-D-Man-(1-&gt;4)-beta-D-GlcNAc-(1-&gt;4)-beta-D-GlcNAc}-L-asparaginyl-[protein] + UDP + H(+). The catalysed reaction is N(4)-{beta-D-GlcNAc-(1-&gt;2)-alpha-D-Man-(1-&gt;3)-[alpha-D-Man-(1-&gt;3)-{alpha-D-Man-(1-&gt;6)}-alpha-D-Man-(1-&gt;6)]-beta-D-Man-(1-&gt;4)-beta-D-GlcNAc-(1-&gt;4)-beta-D-GlcNAc}-asparaginyl-[protein] + UDP-N-acetyl-alpha-D-glucosamine = N(4)-{beta-D-GlcNAc-(1-&gt;2)-[beta-D-GlcNAc-(1-&gt;4)]-alpha-D-Man-(1-&gt;3)-[alpha-D-Man-(1-&gt;3)-{alpha-D-Man-(1-&gt;6)}-alpha-D-Man-(1-&gt;6)]-beta-D-Man-(1-&gt;4)-beta-D-GlcNAc-(1-&gt;4)-beta-D-GlcNAc}-asparaginyl-[protein] + UDP + H(+). The enzyme catalyses N(4)-{beta-D-GlcNAc-(1-&gt;2)-alpha-D-Man-(1-&gt;3)-beta-D-Man-(1-&gt;4)-beta-D-GlcNAc-(1-&gt;4)-beta-D-GlcNAc}-asparaginyl-[protein] + UDP-N-acetyl-alpha-D-glucosamine = N(4)-{beta-D-GlcNAc-(1-&gt;2)-[beta-D-GlcNAc-(1-&gt;4)]-alpha-D-Man-(1-&gt;3)-beta-D-Man-(1-&gt;4)-beta-D-GlcNAc-(1-&gt;4)-beta-D-GlcNAc}-asparaginyl-[protein] + UDP + H(+). The protein operates within protein modification; protein glycosylation. Inhibited by UDP. Glycosyltransferase that catalyze the transfer of GlcNAc from UDP-GlcNAc to the GlcNAcbeta1-2Manalpha1-3 arm of the core structure of N-linked glycans through a beta1-4 linkage and participates in the production of tri- and tetra-antennary N-linked sugar chains. Involved in glucose transport by mediating SLC2A2/GLUT2 glycosylation, thereby controlling cell-surface expression of SLC2A2 in pancreatic beta cells. This chain is Alpha-1,3-mannosyl-glycoprotein 4-beta-N-acetylglucosaminyltransferase A, found in Mus musculus (Mouse).